The sequence spans 33 residues: Nigrocin-1 (33 aa).

Cys-27 and Cys-33 are joined by a disulfide.

The protein belongs to the frog skin active peptide (FSAP) family. Brevinin subfamily. Expressed by the skin dorsal glands.

The protein resides in the secreted. Functionally, shows antibacterial activity against both Gram-positive and Gram-negative bacteria and against the fungus C.albicans. Has no hemolytic activity. The chain is Nigrocin-1 from Pelophylax nigromaculatus (Black-spotted frog).